We begin with the raw amino-acid sequence, 676 residues long: Vitamin K-dependent protein S (676 aa).

The first 24 residues, 1 to 24 (MRVLGGRCGALLACLLLVLPVSEA), serve as a signal peptide directing secretion. The propeptide occupies 25-41 (NFLSKQQASQVLVRKRR). Residues 42–87 (ANSLLEETKQGNLERECIEELCNKEEAREVFENDPETDYFYPKYLV) enclose the Gla domain. A 4-carboxyglutamate mark is found at E47, E48, E55, E57, E60, E61, E66, E67, E70, E73, and E77. A disulfide bridge links C58 with C63. Residues 88 to 116 (CLRSFQTGLFTAARQSTNAYPDLRSCVNA) form a thrombin-sensitive region. In terms of domain architecture, EGF-like 1 spans 117 to 155 (IPDQCSPLPCNEDGYMSCKDGKASFTCTCKPGWQGEKCE). Cystine bridges form between C121–C134, C126–C143, C145–C154, C161–C175, C171–C184, C186–C199, C205–C217, C212–C226, C228–C241, C247–C256, C252–C265, C267–C282, and C449–C475. A (3R)-3-hydroxyaspartate modification is found at D136. The 44-residue stretch at 157-200 (DINECKDPSNINGGCSQICDNTPGSYHCSCKNGFVMLSNKKDCK) folds into the EGF-like 2; calcium-binding domain. An EGF-like 3; calcium-binding domain is found at 201–242 (DVDECSLKPSICGTAVCKNIPGDFECECPEGYRYNLKSKSCE). The EGF-like 4; calcium-binding domain occupies 243–283 (DIDECSENMCAQLCVNYPGGYTCYCDGKKGFKLAQDQKSCE). 2 consecutive Laminin G-like domains span residues 299–475 (LLYL…NKHC) and 484–666 (YYPG…AHSC). 3 N-linked (GlcNAc...) asparagine glycosylation sites follow: N499, N509, and N530. An intrachain disulfide couples C639 to C666.

Post-translationally, the iron and 2-oxoglutarate dependent 3-hydroxylation of aspartate and asparagine is (R) stereospecific within EGF domains. In terms of tissue distribution, plasma.

It localises to the secreted. In terms of biological role, anticoagulant plasma protein; it is a cofactor to activated protein C in the degradation of coagulation factors Va and VIIIa. It helps to prevent coagulation and stimulating fibrinolysis. The protein is Vitamin K-dependent protein S (PROS1) of Homo sapiens (Human).